Reading from the N-terminus, the 262-residue chain is Carboxy-S-adenosyl-L-methionine synthase (262 aa).

S-adenosyl-L-methionine-binding positions include tyrosine 50, 84-86 (GCS), 137-138 (DI), asparagine 152, and arginine 219.

This sequence belongs to the class I-like SAM-binding methyltransferase superfamily. Cx-SAM synthase family. Homodimer.

The enzyme catalyses prephenate + S-adenosyl-L-methionine = carboxy-S-adenosyl-L-methionine + 3-phenylpyruvate + H2O. In terms of biological role, catalyzes the conversion of S-adenosyl-L-methionine (SAM) to carboxy-S-adenosyl-L-methionine (Cx-SAM). The protein is Carboxy-S-adenosyl-L-methionine synthase of Psychrobacter arcticus (strain DSM 17307 / VKM B-2377 / 273-4).